The chain runs to 158 residues: F(420)H(2) dehydrogenase subunit C (158 aa).

Belongs to the complex I 30 kDa subunit family. In terms of assembly, the FPO complex is composed of at least 13 different subunits.

The protein resides in the cell membrane. It carries out the reaction methanophenazine + reduced coenzyme F420-(gamma-L-Glu)(n) = dihydromethanophenazine + oxidized coenzyme F420-(gamma-L-Glu)(n) + H(+). Functionally, component of the F(420)H(2) dehydrogenase (FPO complex) which is part of the energy-conserving F(420)H(2):heterodisulfide oxidoreductase system. The membrane-bound electron transfer system of the complex plays an important role in the metabolism of methylotrophic methanogens when the organisms grow on methanol or methylamines. Catalyzes the oxidation of methanophenazine to dihydromethanophenazine. It shuttles electrons from F(420)H(2), via FAD and iron-sulfur (Fe-S) centers, to methanophenazine (an electron carrier in the membrane). It couples the redox reaction to proton translocation (for every two electrons transferred, two hydrogen ions are translocated across the cytoplasmic membrane), and thus conserves the redox energy in a proton gradient. It also catalyzes the oxidation of F(420)H(2) with quinones such as 2,3-dimethyl-1,4-naphthoquinone, 2-methyl-1,4-naphthoquinone and tetramethyl-p-benzoquinone. The protein is F(420)H(2) dehydrogenase subunit C (fpoC) of Methanosarcina mazei (strain ATCC BAA-159 / DSM 3647 / Goe1 / Go1 / JCM 11833 / OCM 88) (Methanosarcina frisia).